Reading from the N-terminus, the 151-residue chain is Phosphoribosyl-AMP cyclohydrolase (151 aa).

A Mg(2+)-binding site is contributed by aspartate 94. A Zn(2+)-binding site is contributed by cysteine 95. Mg(2+)-binding residues include aspartate 96 and aspartate 98. Zn(2+) is bound by residues cysteine 112 and cysteine 119.

The protein belongs to the PRA-CH family. In terms of assembly, homodimer. Requires Mg(2+) as cofactor. Zn(2+) serves as cofactor.

Its subcellular location is the cytoplasm. The enzyme catalyses 1-(5-phospho-beta-D-ribosyl)-5'-AMP + H2O = 1-(5-phospho-beta-D-ribosyl)-5-[(5-phospho-beta-D-ribosylamino)methylideneamino]imidazole-4-carboxamide. It functions in the pathway amino-acid biosynthesis; L-histidine biosynthesis; L-histidine from 5-phospho-alpha-D-ribose 1-diphosphate: step 3/9. In terms of biological role, catalyzes the hydrolysis of the adenine ring of phosphoribosyl-AMP. In Rhodopseudomonas palustris (strain ATCC BAA-98 / CGA009), this protein is Phosphoribosyl-AMP cyclohydrolase.